We begin with the raw amino-acid sequence, 362 residues long: Ribosome-binding ATPase YchF (362 aa).

Residues 2 to 258 form the OBG-type G domain; the sequence is LSAGIVGLPN…LDANGRQDWL (257 aa). Residue 11-16 coordinates ATP; that stretch reads NVGKST. Positions 15 and 35 each coordinate Mg(2+). Residues 281-347 form the TGS domain; sequence GLWSFFTFGK…EAKKQGLVRL (67 aa).

Belongs to the TRAFAC class OBG-HflX-like GTPase superfamily. OBG GTPase family. YchF/OLA1 subfamily. The cofactor is Mg(2+).

ATPase that binds to both the 70S ribosome and the 50S ribosomal subunit in a nucleotide-independent manner. This Mycoplasma pneumoniae (strain ATCC 29342 / M129 / Subtype 1) (Mycoplasmoides pneumoniae) protein is Ribosome-binding ATPase YchF.